The chain runs to 27 residues: Metalloproteinase inhibitor 1 (27 aa).

Acidic residues predominate over residues 1-12 (IEPERQEEEEEE). The segment at 1–27 (IEPERQEEEEEETRQRVRRGQVRQQQQ) is disordered.

In terms of biological role, metalloproteinase inhibitor, active on a globulinase from L.albus seeds, thermolysin and gelatinase B. This chain is Metalloproteinase inhibitor 1, found in Lupinus albus (White lupine).